The chain runs to 480 residues: Pyruvate kinase II (480 aa).

Arginine 36 contributes to the substrate binding site. K(+) is bound by residues asparagine 38, serine 40, and aspartate 70. Position 38–41 (38–41 (NFSH)) interacts with ATP. The ATP site is built by arginine 77 and lysine 160. Substrate is bound at residue lysine 223. Position 225 (glutamate 225) interacts with Mg(2+). 3 residues coordinate substrate: glycine 251, aspartate 252, and threonine 284. Aspartate 252 is a binding site for Mg(2+).

It belongs to the pyruvate kinase family. Homotetramer. Requires Mg(2+) as cofactor. K(+) serves as cofactor.

The catalysed reaction is pyruvate + ATP = phosphoenolpyruvate + ADP + H(+). It functions in the pathway carbohydrate degradation; glycolysis; pyruvate from D-glyceraldehyde 3-phosphate: step 5/5. Allosterically activated by AMP and by several sugar phosphates. Belongs to type II PK. In terms of biological role, catalyzes the formation of pyruvate in the last step of glycolysis, it is irreversible under physiological conditions. The reaction is critical for the control of metabolic flux in the second part of glycolysis. The chain is Pyruvate kinase II (pykA) from Salmonella typhimurium (strain LT2 / SGSC1412 / ATCC 700720).